Here is a 132-residue protein sequence, read N- to C-terminus: MAKTQRLDIVTPEKVVFSEEIDFVVAPGADGELGILPEHAPLVTALKVGTLRVQQGGKFFKVAVSGGFMEVKNSRIVVLADTAERADQIDVERAKAAKQRAEQRLNSKGSEIDVHRAEIALHKAINRIKAAE.

This sequence belongs to the ATPase epsilon chain family. As to quaternary structure, F-type ATPases have 2 components, CF(1) - the catalytic core - and CF(0) - the membrane proton channel. CF(1) has five subunits: alpha(3), beta(3), gamma(1), delta(1), epsilon(1). CF(0) has three main subunits: a, b and c.

The protein resides in the cell membrane. Produces ATP from ADP in the presence of a proton gradient across the membrane. This Desulforamulus reducens (strain ATCC BAA-1160 / DSM 100696 / MI-1) (Desulfotomaculum reducens) protein is ATP synthase epsilon chain.